Reading from the N-terminus, the 213-residue chain is MSEGEVDVAAVSQYEVLPKEVLAEVGSVKLFNRWSYEDVEIRDISLTDYIQIRSPVYLPHSAGRYAAKRFRKANCPIIERLTNSLMMHGRNNGKKLMAVRIVAHAFEIIHLMTDQNPIQIAVDAIVNCGPREDSTRIGSAGTVRRQAVDVSPLRRVNQAIALLTTGAREASFRNVKSIAECLAEELINAAKGSSNSYAIKKKDELERVAKSNR.

This sequence belongs to the universal ribosomal protein uS7 family. Component of the small ribosomal subunit (SSU). Mature N.crassa ribosomes consist of a small (40S) and a large (60S) subunit. The 40S small subunit contains 1 molecule of ribosomal RNA (18S rRNA) and at least 32 different proteins. The large 60S subunit contains 3 rRNA molecules (26S, 5.8S and 5S rRNA) and at least 42 different proteins.

It is found in the cytoplasm. In terms of biological role, component of the ribosome, a large ribonucleoprotein complex responsible for the synthesis of proteins in the cell. The small ribosomal subunit (SSU) binds messenger RNAs (mRNAs) and translates the encoded message by selecting cognate aminoacyl-transfer RNA (tRNA) molecules. The large subunit (LSU) contains the ribosomal catalytic site termed the peptidyl transferase center (PTC), which catalyzes the formation of peptide bonds, thereby polymerizing the amino acids delivered by tRNAs into a polypeptide chain. The nascent polypeptides leave the ribosome through a tunnel in the LSU and interact with protein factors that function in enzymatic processing, targeting, and the membrane insertion of nascent chains at the exit of the ribosomal tunnel. The sequence is that of Small ribosomal subunit protein uS7 (rps-5) from Neurospora crassa (strain ATCC 24698 / 74-OR23-1A / CBS 708.71 / DSM 1257 / FGSC 987).